The primary structure comprises 410 residues: Serine hydroxymethyltransferase (410 aa).

Residues Leu-119 and 123–125 (GHL) each bind (6S)-5,6,7,8-tetrahydrofolate. Lys-228 bears the N6-(pyridoxal phosphate)lysine mark. Residue 351-353 (SPF) participates in (6S)-5,6,7,8-tetrahydrofolate binding.

Belongs to the SHMT family. In terms of assembly, homodimer. It depends on pyridoxal 5'-phosphate as a cofactor.

The protein resides in the cytoplasm. The enzyme catalyses (6R)-5,10-methylene-5,6,7,8-tetrahydrofolate + glycine + H2O = (6S)-5,6,7,8-tetrahydrofolate + L-serine. Its pathway is one-carbon metabolism; tetrahydrofolate interconversion. It participates in amino-acid biosynthesis; glycine biosynthesis; glycine from L-serine: step 1/1. In terms of biological role, catalyzes the reversible interconversion of serine and glycine with tetrahydrofolate (THF) serving as the one-carbon carrier. This reaction serves as the major source of one-carbon groups required for the biosynthesis of purines, thymidylate, methionine, and other important biomolecules. Also exhibits THF-independent aldolase activity toward beta-hydroxyamino acids, producing glycine and aldehydes, via a retro-aldol mechanism. This is Serine hydroxymethyltransferase from Clostridium perfringens (strain ATCC 13124 / DSM 756 / JCM 1290 / NCIMB 6125 / NCTC 8237 / Type A).